Here is a 240-residue protein sequence, read N- to C-terminus: MNNTIETILAHRSIRKFTAVPITDEQRQTIIQAGLAASSSSMLQVVSIVRVTDSEKRNELAQFAGNQAYVESAAEFLVFCIDYQRHATINPDVQADFTELTLIGAVDSGIMAQNCLLAAESMGLGGVYIGGLRNSAAQVDELLGLPENSAVLFGMCLGHPDQNPEVKPRLPAHVVVHENQYQELNLDDIQSYDQTMQAYYASRTSNQKLSTWSQEVTGKLAGESRPHILPYLNSKGLAKR.

FMN is bound by residues 11 to 15 (HRSIR), S39, 67 to 69 (QAY), 128 to 131 (YIGG), and 167 to 169 (KPR).

Belongs to the flavin oxidoreductase frp family. As to quaternary structure, homodimer.

The catalysed reaction is FMNH2 + NADP(+) = FMN + NADPH + 2 H(+). Its function is as follows. Catalyzes the NADPH-dependent reduction of FMN to FMNH(2). Involved in bioluminescence by providing FMNH(2) to luciferase. This Vibrio harveyi (Beneckea harveyi) protein is NADPH-flavin oxidoreductase.